The following is a 143-amino-acid chain: MRDADADAGGGADGGDGRGGHSCRGGVDTAAAPAGGAPPAHAPGPGRDAASAARGSRMRPHIFTLSVPFPTPLEAEIAHGSLAPDAEPHQRVVGKDLTVSGRILVVRWKAEDCRLLRISVINFLDQLSLVVRTMQRFGPPVSR.

Residues 1 to 57 (MRDADADAGGGADGGDGRGGHSCRGGVDTAAAPAGGAPPAHAPGPGRDAASAARGSR) form a disordered region. The segment covering 30-55 (AAAPAGGAPPAHAPGPGRDAASAARG) has biased composition (low complexity).

It belongs to the CTAG/PCC1 family. In terms of assembly, component of the EKC/KEOPS complex composed of at least GON7, TP53RK, TPRKB, OSGEP and LAGE3; the whole complex dimerizes. As to expression, ubiquitous.

It localises to the cytoplasm. The protein resides in the nucleus. Component of the EKC/KEOPS complex that is required for the formation of a threonylcarbamoyl group on adenosine at position 37 (t(6)A37) in tRNAs that read codons beginning with adenine. The complex is probably involved in the transfer of the threonylcarbamoyl moiety of threonylcarbamoyl-AMP (TC-AMP) to the N6 group of A37. LAGE3 functions as a dimerization module for the complex. In Homo sapiens (Human), this protein is EKC/KEOPS complex subunit LAGE3.